The chain runs to 102 residues: Co-chaperonin GroES (102 aa).

Belongs to the GroES chaperonin family. Heptamer of 7 subunits arranged in a ring. Interacts with the chaperonin GroEL.

Its subcellular location is the cytoplasm. Together with the chaperonin GroEL, plays an essential role in assisting protein folding. The GroEL-GroES system forms a nano-cage that allows encapsulation of the non-native substrate proteins and provides a physical environment optimized to promote and accelerate protein folding. GroES binds to the apical surface of the GroEL ring, thereby capping the opening of the GroEL channel. The chain is Co-chaperonin GroES from Streptomyces avermitilis (strain ATCC 31267 / DSM 46492 / JCM 5070 / NBRC 14893 / NCIMB 12804 / NRRL 8165 / MA-4680).